The primary structure comprises 393 residues: UDP-N-acetylglucosamine--N-acetylmuramyl-(pentapeptide) pyrophosphoryl-undecaprenol N-acetylglucosamine transferase (393 aa).

UDP-N-acetyl-alpha-D-glucosamine contacts are provided by residues 14 to 16 (TAG), Asn-128, Arg-170, Ser-210, and Gln-321.

This sequence belongs to the glycosyltransferase 28 family. MurG subfamily.

The protein localises to the cell membrane. It catalyses the reaction di-trans,octa-cis-undecaprenyl diphospho-N-acetyl-alpha-D-muramoyl-L-alanyl-D-glutamyl-meso-2,6-diaminopimeloyl-D-alanyl-D-alanine + UDP-N-acetyl-alpha-D-glucosamine = di-trans,octa-cis-undecaprenyl diphospho-[N-acetyl-alpha-D-glucosaminyl-(1-&gt;4)]-N-acetyl-alpha-D-muramoyl-L-alanyl-D-glutamyl-meso-2,6-diaminopimeloyl-D-alanyl-D-alanine + UDP + H(+). It participates in cell wall biogenesis; peptidoglycan biosynthesis. Its function is as follows. Cell wall formation. Catalyzes the transfer of a GlcNAc subunit on undecaprenyl-pyrophosphoryl-MurNAc-pentapeptide (lipid intermediate I) to form undecaprenyl-pyrophosphoryl-MurNAc-(pentapeptide)GlcNAc (lipid intermediate II). The chain is UDP-N-acetylglucosamine--N-acetylmuramyl-(pentapeptide) pyrophosphoryl-undecaprenol N-acetylglucosamine transferase from Bifidobacterium adolescentis (strain ATCC 15703 / DSM 20083 / NCTC 11814 / E194a).